The primary structure comprises 664 residues: Prelamin-A/C (664 aa).

Position 1 is an N-acetylmethionine (M1). The disordered stretch occupies residues 1-24; it reads METPSQRRATRSGAQASSTPLSPT. Residues 1 to 33 are head; sequence METPSQRRATRSGAQASSTPLSPTRITRLQEKE. The tract at residues 1–130 is interaction with MLIP; that stretch reads METPSQRRAT…TKKEGDLMAA (130 aa). T3 carries the phosphothreonine modification. A Phosphoserine modification is found at S5. Position 10 is a phosphothreonine (T10). 2 positions are modified to phosphoserine: S12 and S18. Position 19 is a phosphothreonine (T19). The residue at position 22 (S22) is a Phosphoserine. The IF rod domain occupies 31-387; it reads EKEDLQELND…KLLEGEEERL (357 aa). N6-acetyllysine; alternate is present on K32. K32 is subject to N6-succinyllysine; alternate. K32 is covalently cross-linked (Glycyl lysine isopeptide (Lys-Gly) (interchain with G-Cter in SUMO2); alternate). The segment at 34-70 is coil 1A; it reads DLQELNDRLAVYIDRVRSLETENAGLRLRITESEEVV. Phosphoserine is present on residues S51, S66, and S71. Residues 71-80 are linker 1; the sequence is SREVSGIKSA. An N6-acetyllysine mark is found at K78 and K97. The coil 1B stretch occupies residues 81-218; sequence YEAELGDARK…NIYSEELRET (138 aa). Residue K97 forms a Glycyl lysine isopeptide (Lys-Gly) (interchain with G-Cter in SUMO2) linkage. A Phosphoserine modification is found at S107. 6 positions are modified to N6-acetyllysine: K108, K114, K123, K135, K144, and K155. K171 bears the N6-acetyllysine; alternate mark. K171 bears the N6-succinyllysine; alternate mark. K171 participates in a covalent cross-link: Glycyl lysine isopeptide (Lys-Gly) (interchain with G-Cter in SUMO2); alternate. N6-acetyllysine occurs at positions 180, 201, and 208. Residue K201 forms a Glycyl lysine isopeptide (Lys-Gly) (interchain with G-Cter in SUMO2); alternate linkage. A Glycyl lysine isopeptide (Lys-Gly) (interchain with G-Cter in SUMO); alternate cross-link involves residue K201. K208 participates in a covalent cross-link: Glycyl lysine isopeptide (Lys-Gly) (interchain with G-Cter in SUMO2). Phosphoserine is present on S212. Residues K219 and K233 each participate in a glycyl lysine isopeptide (Lys-Gly) (interchain with G-Cter in SUMO2) cross-link. Residues 219–242 are linker 2; it reads KRRHETRLVEIDNGKQREFESRLA. An N6-acetyllysine mark is found at K233, K260, K265, and K270. Positions 243 to 383 are coil 2; that stretch reads DALQDLRAQH…HAYRKLLEGE (141 aa). K260 is covalently cross-linked (Glycyl lysine isopeptide (Lys-Gly) (interchain with G-Cter in SUMO2); alternate). K270 participates in a covalent cross-link: Glycyl lysine isopeptide (Lys-Gly) (interchain with G-Cter in SUMO2); alternate. Phosphoserine is present on residues S277, S282, S301, and S307. K311 is covalently cross-linked (Glycyl lysine isopeptide (Lys-Gly) (interchain with G-Cter in SUMO2); alternate). N6-acetyllysine is present on residues K311, K316, and K341. Glycyl lysine isopeptide (Lys-Gly) (interchain with G-Cter in SUMO2) cross-links involve residues K366 and K378. Positions 384–442 are disordered; sequence EERLRLSPSPTSQRSRGRASSHSSQTQSGGSVTKKRKLESSESRSSFSQHARTSGRVAV. The interval 384–664 is tail; sequence EERLRLSPSP…TQSPQNCSIM (281 aa). Phosphoserine occurs at positions 390, 392, 395, 398, 403, 404, 406, 407, and 414. The span at 403–414 shows a compositional bias: low complexity; it reads SSHSSQTQSGGS. Position 416 is a phosphothreonine (T416). K417 is subject to N6-acetyllysine. Glycyl lysine isopeptide (Lys-Gly) (interchain with G-Cter in SUMO2) cross-links involve residues K417 and K420. The Nuclear localization signal signature appears at 417–422; the sequence is KKRKLE. Phosphoserine is present on residues S423, S426, S429, and S431. The 118-residue stretch at 428-545 folds into the LTD domain; the sequence is SSFSQHARTS…EEVAMRKLVR (118 aa). K450 participates in a covalent cross-link: Glycyl lysine isopeptide (Lys-Gly) (interchain with G-Cter in SUMO2); alternate. 2 positions are modified to N6-acetyllysine: K450 and K457. 2 positions are modified to phosphoserine: S458 and S463. Residues K470 and K486 each participate in a glycyl lysine isopeptide (Lys-Gly) (interchain with G-Cter in SUMO2) cross-link. N6-acetyllysine is present on K486. Phosphothreonine occurs at positions 496 and 505. 2 positions are modified to phosphoserine: S533 and S546. Residue T548 is modified to Phosphothreonine. Residues 555–577 are disordered; the sequence is DEDGDDLLHHHHGSHGSSSGDPA. S568 and S571 each carry phosphoserine. K597 participates in a covalent cross-link: Glycyl lysine isopeptide (Lys-Gly) (interchain with G-Cter in SUMO2); alternate. K597 participates in a covalent cross-link: Glycyl lysine isopeptide (Lys-Gly) (interchain with G-Cter in SUMO1); alternate. The interval 598–620 is disordered; sequence ASASSSGAQVGGSISSGSSASSV. Residues S612, S613, S616, and S619 each carry the phosphoserine modification. O-linked (GlcNAc) serine glycosylation is found at S625 and S628. Phosphoserine is present on residues S628, S632, and S636. A propeptide spans 647 to 661 (removed in Lamin-A/C form); it reads LLGNSRPRTQSPQNC. At C661 the chain carries Cysteine methyl ester. C661 carries the S-farnesyl cysteine lipid modification. A propeptide spans 662–664 (removed in Prelamin-A/C form and in Lamin-A/C form); that stretch reads SIM.

Belongs to the intermediate filament family. As to quaternary structure, homodimer of lamin A and lamin C. Lamin dimers then assemble into dimeric head-to-tail polymers. Ultimately, two head-to-tail polymers assemble laterally into a protofilament with a uniformly shaped rod of 3.5 nm in diameter. Interacts with lamin-associated polypeptides IA, IB and TMPO-alpha, RB1 and with emerin. Interacts with SREBF1, SREBF2, SUN2 and TMEM43. Interacts with TMEM201. Proteolytically processed isoform A interacts with NARF. Interacts with SUN1. Interacts with MLIP. Interacts with DMPK; may regulate nuclear envelope stability. Interacts with SUV39H1; the interaction increases stability of SUV39H1. Interacts with SYNE2. Interacts with ITSN1 isoform 2. Interacts with IFFO1; enables the formation of an interior nucleoskeleton that is recruited to DNA double-strand breaks. In terms of assembly, interacts with EMD. Interacts (via C-terminus) with LEMD2 (via N-terminus) (in vitro). Proteolytic cleavage of the C-terminal of 18 residues of prelamin-A/C results in the production of lamin-A/C. The prelamin-A/C maturation pathway includes farnesylation of CAAX motif by protein farnesyltransferase (FNTA and FNTB), removal of the last three amino acids (-AAX) by RCE1/FACE2 and/or ZMPSTE24, methylation of the C-terminal cysteine by ICMT and endoproteolytic removal of the last 15 C-terminal amino acids by ZMPSTE24. Proteolytic cleavage requires prior farnesylation and methylation, and absence of these blocks cleavage. Post-translationally, farnesylation of prelamin-A/C facilitates nuclear envelope targeting. In terms of processing, phosphorylation plays a key role in lamin organization, subcellular localization and nuclear envelope disintegration. Phosphorylation by CDK1 at Ser-22 and Ser-392 at the onset of mitosis drives lamin disassembly and nuclear envelope breakdown. Phosphorylation at Ser-22 and Ser-392 during interphase promotes localization to the nucleoplasm and regulates lamina assembly. Phosphorylation at Ser-22, Ser-392 and Ser-628 during interphase causes redistribution between the nucleus and the cytoplasm. Phosphorylation at Ser-22 by CDK1 regulates matrix stiffness. Phosphorylation status of Ser-22 determines its localization between double-strand break (DSB) sites and the nuclear matrix. Phosphorylated by ATR at Ser-282 in response to DNA damage, leading to lamin disassembly and nuclear envelope rupture. Phosphorylation also regulates stability in micronuclei arising from genome instability: phosphorylation at Ser-395 by ATR in response to genome instability and double-stranded DNA breaks primes LMNA for subsequent phosphorylation at Ser-392 by CDK1 and micronuclei envelope rupture. The rupture of micronuclear envelope triggers the cGAS-STING pathway thereby activating the type I interferon response and innate immunity. Acetylation by KAT8 is required for nuclear architecture. Post-translationally, sumoylation is necessary for the localization to the nuclear envelope.

It is found in the nucleus lamina. It localises to the nucleus envelope. Its subcellular location is the nucleus. The protein resides in the nucleoplasm. The protein localises to the nucleus matrix. In terms of biological role, lamins are intermediate filament proteins that assemble into a filamentous meshwork, and which constitute the major components of the nuclear lamina, a fibrous layer on the nucleoplasmic side of the inner nuclear membrane. Lamins provide a framework for the nuclear envelope, bridging the nuclear envelope and chromatin, thereby playing an important role in nuclear assembly, chromatin organization, nuclear membrane and telomere dynamics. Lamin A and C also regulate matrix stiffness by conferring nuclear mechanical properties. The structural integrity of the lamina is strictly controlled by the cell cycle, as seen by the disintegration and formation of the nuclear envelope in prophase and telophase, respectively. Lamin A and C are present in equal amounts in the lamina of mammals. Also invoved in DNA repair: recruited by DNA repair proteins XRCC4 and IFFO1 to the DNA double-strand breaks (DSBs) to prevent chromosome translocation by immobilizing broken DNA ends. Required for normal development of peripheral nervous system and skeletal muscle and for muscle satellite cell proliferation. Required for osteoblastogenesis and bone formation. Also prevents fat infiltration of muscle and bone marrow, helping to maintain the volume and strength of skeletal muscle and bone. Required for cardiac homeostasis. Its function is as follows. Prelamin-A/C can accelerate smooth muscle cell senescence. It acts to disrupt mitosis and induce DNA damage in vascular smooth muscle cells (VSMCs), leading to mitotic failure, genomic instability, and premature senescence. This is Prelamin-A/C (LMNA) from Sus scrofa (Pig).